Reading from the N-terminus, the 165-residue chain is Phosphopantetheine adenylyltransferase (165 aa).

Position 9 (Ser-9) interacts with substrate. Residues 9–10 (SF) and His-17 contribute to the ATP site. Substrate-binding residues include Lys-41, Ile-75, and Arg-89. ATP is bound by residues 90–92 (GVR), Glu-100, and 125–131 (YLFVRSD).

This sequence belongs to the bacterial CoaD family. In terms of assembly, homohexamer. It depends on Mg(2+) as a cofactor.

The protein localises to the cytoplasm. It carries out the reaction (R)-4'-phosphopantetheine + ATP + H(+) = 3'-dephospho-CoA + diphosphate. Its pathway is cofactor biosynthesis; coenzyme A biosynthesis; CoA from (R)-pantothenate: step 4/5. Functionally, reversibly transfers an adenylyl group from ATP to 4'-phosphopantetheine, yielding dephospho-CoA (dPCoA) and pyrophosphate. This Borrelia duttonii (strain Ly) protein is Phosphopantetheine adenylyltransferase.